Reading from the N-terminus, the 576-residue chain is Formate--tetrahydrofolate ligase 1 (576 aa).

69-76 (TPLGEGKT) lines the ATP pocket.

The protein belongs to the formate--tetrahydrofolate ligase family.

It carries out the reaction (6S)-5,6,7,8-tetrahydrofolate + formate + ATP = (6R)-10-formyltetrahydrofolate + ADP + phosphate. The protein operates within one-carbon metabolism; tetrahydrofolate interconversion. The polypeptide is Formate--tetrahydrofolate ligase 1 (Rubrobacter xylanophilus (strain DSM 9941 / JCM 11954 / NBRC 16129 / PRD-1)).